Reading from the N-terminus, the 950-residue chain is Leucine--tRNA ligase (950 aa).

Residues 41–52 (PYPSGDGLHVGH) carry the 'HIGH' region motif. A 'KMSKS' region motif is present at residues 718 to 722 (KMSKS). K721 is a binding site for ATP.

This sequence belongs to the class-I aminoacyl-tRNA synthetase family.

The protein resides in the cytoplasm. It carries out the reaction tRNA(Leu) + L-leucine + ATP = L-leucyl-tRNA(Leu) + AMP + diphosphate. This is Leucine--tRNA ligase from Rhodopirellula baltica (strain DSM 10527 / NCIMB 13988 / SH1).